The following is a 645-amino-acid chain: Sodium-dependent phosphate transporter 2 (645 aa).

Topologically, residues 1–5 (MAMDE) are extracellular. Residues 6–26 (YLWMVILGFIIAFILAFSVGA) form a helical membrane-spanning segment. The Cytoplasmic segment spans residues 27–46 (NDVANSFGTAVGSGVVTLRQ). The helical transmembrane segment at 47-67 (ACILASIFETTGSVLLGAKVG) threads the bilayer. The Extracellular segment spans residues 68 to 86 (ETIRKGIIDVNLYNNTVET). Residue Asn-81 is glycosylated (N-linked (GlcNAc...) asparagine). A helical membrane pass occupies residues 87-107 (LMAGEVSAMVGSAVWQLIASF). The Cytoplasmic portion of the chain corresponds to 108-109 (LR). Residues 110–130 (FPISGTHCIVGATIGFSLVAI) traverse the membrane as a helical segment. Residues 131–142 (GTQGVQWMELVK) are Extracellular-facing. The chain crosses the membrane as a helical span at residues 143 to 163 (IVASWFISPLLSGFMSGVLFV). Over 164-190 (LIRMFILKKEDPVPNGLRALPVFYAAT) the chain is Cytoplasmic. A helical membrane pass occupies residues 191–211 (IAINVFSIMYTGAPVMGLVLP). Residues 212–213 (MW) are Extracellular-facing. Residues 214–234 (AIALISFGVALLFALFVWLFV) traverse the membrane as a helical segment. Over 235–475 (CPWMRRKITG…EEKEEKDSPE (241 aa)) the chain is Cytoplasmic. 6 positions are modified to phosphoserine: Ser-253, Ser-256, Ser-259, Ser-268, Ser-316, and Ser-379. The segment at 275 to 320 (PGAKAHDDSTVPLTGSAADPSGTSESMSGGHHPRAPYGRALSMTHG) is disordered. The segment at 448-471 (RLAPPLAEPEPPRDDPADEEKEEK) is disordered. The chain crosses the membrane as a helical span at residues 476–496 (VHLLFHFLQVLTACFGSFAHG). Topologically, residues 497–523 (GNDVSNAIGPLVALWLIYEQGAVLQEA) are extracellular. A helical membrane pass occupies residues 524–544 (ATPVWLLFYGGVGICTGLWVW). The Cytoplasmic portion of the chain corresponds to 545–564 (GRRVIQTMGKDLTPITPSSG). Residues 565–579 (FTIELASAFTVVIAS) form a helical membrane-spanning segment. Topologically, residues 580-586 (NIGLPVS) are extracellular. The chain crosses the membrane as a helical span at residues 587-602 (TTHCKVGSVVAVGWIR). The Cytoplasmic segment spans residues 603 to 614 (SRKAVDWRLFRN). Residues 615–635 (IFVAWFVTVPVAGLFSAAIMA) traverse the membrane as a helical segment. Over 636 to 645 (LLIHGILPFV) the chain is Extracellular.

The protein belongs to the inorganic phosphate transporter (PiT) (TC 2.A.20) family. In terms of assembly, homodimer.

Its subcellular location is the cell membrane. The protein localises to the apical cell membrane. It carries out the reaction 2 Na(+)(out) + phosphate(out) = 2 Na(+)(in) + phosphate(in). Functionally, sodium-phosphate symporter which preferentially transports the monovalent form of phosphate with a stoichiometry of two sodium ions per phosphate ion. Plays a critical role in the determination of bone quality and strength by providing phosphate for bone mineralization. Required to maintain normal cerebrospinal fluid phosphate levels. Mediates phosphate-induced calcification of vascular smooth muscle cells (VCMCs) and can functionally compensate for loss of SLC20A1 in VCMCs. The protein is Sodium-dependent phosphate transporter 2 (SLC20A2) of Bos taurus (Bovine).